A 95-amino-acid polypeptide reads, in one-letter code: Cell division protein FtsB (95 aa).

The Cytoplasmic portion of the chain corresponds to 1–3; it reads MKW. A helical membrane pass occupies residues 4-21; the sequence is VTGLLVVLLLGLQYKLWI. The Periplasmic segment spans residues 22–95; the sequence is GEGSVAEVWQ…QVVGRPGETP (74 aa). Residues 26–73 are a coiled coil; the sequence is VAEVWQLRQTLEAQRAENEELRYRNAALDAEVTDLKTGLDAIEERARR.

Belongs to the FtsB family. As to quaternary structure, part of a complex composed of FtsB, FtsL and FtsQ.

It localises to the cell inner membrane. Its function is as follows. Essential cell division protein. May link together the upstream cell division proteins, which are predominantly cytoplasmic, with the downstream cell division proteins, which are predominantly periplasmic. This is Cell division protein FtsB from Thioalkalivibrio sulfidiphilus (strain HL-EbGR7).